A 428-amino-acid polypeptide reads, in one-letter code: Bifunctional IPC transferase and DIPP synthase (428 aa).

The mobA-like NTP transferase stretch occupies residues 2-227 (VETAVILAGG…KAKKYLVKTA (226 aa)). Residues 8-10 (LAG), lysine 25, glutamate 80, and glutamate 116 contribute to the CTP site. Glutamate 116 contributes to the Mg(2+) binding site. The interval 228–425 (IKGVGDGFIS…LTIYLVWKKK (198 aa)) is CDP-alcohol phosphatidyltransferases. The next 3 helical transmembrane spans lie at 266–286 (FLLG…GGIL), 336–356 (PSWD…MVSY), and 389–409 (MIMI…LAII).

In the N-terminal section; belongs to the MobA family. It in the C-terminal section; belongs to the CDP-alcohol phosphatidyltransferase class-I family. The cofactor is Mg(2+).

It localises to the membrane. It carries out the reaction 1D-myo-inositol 3-phosphate + CTP + H(+) = CDP-1L-myo-inositol + diphosphate. The enzyme catalyses CDP-1L-myo-inositol + 1D-myo-inositol 3-phosphate = bis(1L-myo-inositol) 3,1'-phosphate 1-phosphate + CMP + H(+). Its function is as follows. Involved in biosynthesis of di-myo-inositol phosphate (DIP), a widespread organic solute in microorganisms adapted to hot environments. Catalyzes the condensation of CTP and L-myo-inositol-1-phosphate into CDP-L-myo-inositol, as well as the biosynthesis of di-myo-inositol-1,3'-phosphate-1'-phosphate (DIPP) from CDP-L-myo-inositol and L-myo-inositol-1-phosphate. This chain is Bifunctional IPC transferase and DIPP synthase (spsI), found in Aquifex aeolicus (strain VF5).